Here is a 31-residue protein sequence, read N- to C-terminus: Elongation factor Tu (31 aa).

The protein belongs to the GTP-binding elongation factor family. EF-Tu/EF-1A subfamily. Monomer.

It is found in the cytoplasm. Its function is as follows. This protein promotes the GTP-dependent binding of aminoacyl-tRNA to the A-site of ribosomes during protein biosynthesis. The protein is Elongation factor Tu (tuf) of Streptomyces laurentii.